A 2531-amino-acid chain; its full sequence is Highly reducing polyketide synthase ausV (2531 aa).

The Ketosynthase family 3 (KS3) domain occupies 7–432; it reads STPIAIIGLS…GTNAHCVMET (426 aa). Residues cysteine 180, histidine 315, and histidine 355 each act as for beta-ketoacyl synthase activity in the active site. The interval 554–882 is malonyl-CoA:ACP transacylase (MAT) domain; it reads FVFTGQGAQW…HHTLLESMGS (329 aa). The active-site For malonyltransferase activity is serine 644. The segment at 939–1069 is N-terminal hotdog fold; the sequence is HDLCGIRVED…GSVLAGTPSD (131 aa). Residues 939–1238 enclose the PKS/mFAS DH domain; sequence HDLCGIRVED…LATLSVRSGD (300 aa). A dehydratase (DH) domain region spans residues 940-1236; it reads DLCGIRVEDD…LELATLSVRS (297 aa). The active-site Proton acceptor; for dehydratase activity is the histidine 971. The segment at 1087-1238 is C-terminal hotdog fold; sequence YVETTPRQAY…LATLSVRSGD (152 aa). The active-site Proton donor; for dehydratase activity is the aspartate 1152. The methyltransferase (CMet) domain stretch occupies residues 1414 to 1592; sequence SSYLRLHARN…DTGFSGVDIS (179 aa). Residues 1832–2133 are enoyl reductase (ER) domain; sequence LRFVQDPAYW…SGGAKPGCSR (302 aa). A ketoreductase (KR) domain region spans residues 2156-2331; that stretch reads HGRALVPDFH…AGVSLSLGFI (176 aa). One can recognise a Carrier domain in the interval 2444–2521; it reads AAATAVLDAL…ELARDLALRS (78 aa). An O-(pantetheine 4'-phosphoryl)serine modification is found at serine 2481.

It functions in the pathway secondary metabolite biosynthesis; terpenoid biosynthesis. Its function is as follows. Highly reducing polyketide synthase; part of the gene cluster that mediates the biosynthesis of calidodehydroaustin, a fungal meroterpenoid. The first step of the pathway is the synthesis of 3,5-dimethylorsellinic acid by the polyketide synthase ausA. 3,5-dimethylorsellinic acid is then prenylated by the polyprenyl transferase ausN. Further epoxidation by the FAD-dependent monooxygenase ausM and cyclization by the probable terpene cyclase ausL lead to the formation of protoaustinoid A. Protoaustinoid A is then oxidized to spiro-lactone preaustinoid A3 by the combined action of the FAD-binding monooxygenases ausB and ausC, and the dioxygenase ausE. Acid-catalyzed keto-rearrangement and ring contraction of the tetraketide portion of preaustinoid A3 by ausJ lead to the formation of preaustinoid A4. The aldo-keto reductase ausK, with the help of ausH, is involved in the next step by transforming preaustinoid A4 into isoaustinone which is in turn hydroxylated by the P450 monooxygenase ausI to form austinolide. The cytochrome P450 monooxygenase ausG modifies austinolide to austinol. Austinol is further acetylated to austin by the O-acetyltransferase ausP, which spontaneously changes to dehydroaustin. The cytochrome P450 monooxygenase ausR then converts dehydroaustin is into 7-dehydrodehydroaustin. The hydroxylation catalyzed by ausR permits the O-acetyltransferase ausQ to add an additional acetyl group to the molecule, leading to the formation of acetoxydehydroaustin. The short chain dehydrogenase ausT catalyzes the reduction of the double bond present between carbon atoms 1 and 2 to convert 7-dehydrodehydroaustin into 1,2-dihydro-7-hydroxydehydroaustin. AusQ catalyzes not only an acetylation reaction but also the addition of the PKS ausV diketide product to 1,2-dihydro-7-hydroxydehydroaustin, forming precalidodehydroaustin. Finally, the iron/alpha-ketoglutarate-dependent dioxygenase converts precalidodehydroaustin into calidodehydroaustin. The chain is Highly reducing polyketide synthase ausV from Aspergillus calidoustus.